The primary structure comprises 289 residues: Bis(5'-nucleosyl)-tetraphosphatase, symmetrical (289 aa).

This sequence belongs to the Ap4A hydrolase family.

The catalysed reaction is P(1),P(4)-bis(5'-adenosyl) tetraphosphate + H2O = 2 ADP + 2 H(+). Functionally, hydrolyzes diadenosine 5',5'''-P1,P4-tetraphosphate to yield ADP. This chain is Bis(5'-nucleosyl)-tetraphosphatase, symmetrical, found in Yersinia pseudotuberculosis serotype O:3 (strain YPIII).